The sequence spans 289 residues: Phenylalanine-4-hydroxylase (289 aa).

Fe cation contacts are provided by His-144, His-149, and Glu-189.

It belongs to the biopterin-dependent aromatic amino acid hydroxylase family. Fe(2+) serves as cofactor.

The catalysed reaction is (6R)-L-erythro-5,6,7,8-tetrahydrobiopterin + L-phenylalanine + O2 = (4aS,6R)-4a-hydroxy-L-erythro-5,6,7,8-tetrahydrobiopterin + L-tyrosine. It participates in amino-acid degradation; L-phenylalanine degradation; acetoacetate and fumarate from L-phenylalanine: step 1/6. The sequence is that of Phenylalanine-4-hydroxylase (phhA) from Vibrio cholerae serotype O1 (strain ATCC 39315 / El Tor Inaba N16961).